The sequence spans 683 residues: UvrABC system protein B (683 aa).

The segment at 1–29 (MTDTGPLQPDRPDLDRPLSVDAPFEPAGD) is disordered. Positions 39–417 (AGFESGAEKQ…PGDYERDHSE (379 aa)) constitute a Helicase ATP-binding domain. Residue 52-59 (GVTGSGKT) participates in ATP binding. Residues 105-128 (YYDYYQPEAYVEQTDTYIDKDMSI) carry the Beta-hairpin motif. Residues 442-604 (QVEDLIERIQ…EPRTIEKPVS (163 aa)) form the Helicase C-terminal domain. The segment covering 587-603 (EFNAEHGHEPRTIEKPV) has biased composition (basic and acidic residues). The disordered stretch occupies residues 587–620 (EFNAEHGHEPRTIEKPVSETNLPGSSTDTDGVAD). Residues 604–615 (SETNLPGSSTDT) are compositionally biased toward polar residues. Residues 630–665 (EQLIERLETRMQEAADNLEFELAADIRDRIRELRET) form the UVR domain.

This sequence belongs to the UvrB family. As to quaternary structure, forms a heterotetramer with UvrA during the search for lesions. Interacts with UvrC in an incision complex.

Its subcellular location is the cytoplasm. Its function is as follows. The UvrABC repair system catalyzes the recognition and processing of DNA lesions. A damage recognition complex composed of 2 UvrA and 2 UvrB subunits scans DNA for abnormalities. Upon binding of the UvrA(2)B(2) complex to a putative damaged site, the DNA wraps around one UvrB monomer. DNA wrap is dependent on ATP binding by UvrB and probably causes local melting of the DNA helix, facilitating insertion of UvrB beta-hairpin between the DNA strands. Then UvrB probes one DNA strand for the presence of a lesion. If a lesion is found the UvrA subunits dissociate and the UvrB-DNA preincision complex is formed. This complex is subsequently bound by UvrC and the second UvrB is released. If no lesion is found, the DNA wraps around the other UvrB subunit that will check the other stand for damage. This Natronomonas pharaonis (strain ATCC 35678 / DSM 2160 / CIP 103997 / JCM 8858 / NBRC 14720 / NCIMB 2260 / Gabara) (Halobacterium pharaonis) protein is UvrABC system protein B.